Consider the following 1444-residue polypeptide: Probable chitinase LysM18 (1444 aa).

2 consecutive LysM domains span residues 256–302 and 321–369; these read STVQ…HFCC and TTYT…IICL. Residues 382-450 enclose the Chitin-binding type-1 domain; it reads NAECGPQVPG…TNGCISNCGT (69 aa). 4 disulfides stabilise this stretch: C385–C413, C407–C419, C412–C426, and C444–C448. One can recognise a GH18 domain in the interval 461-831; that stretch reads YRKVGFYEGF…STSWTKFTSD (371 aa). E582 functions as the Proton donor in the catalytic mechanism. 2 residues coordinate chitin: Y583 and W808.

Belongs to the glycosyl hydrolase 18 family. Chitinase class V subfamily.

The enzyme catalyses Random endo-hydrolysis of N-acetyl-beta-D-glucosaminide (1-&gt;4)-beta-linkages in chitin and chitodextrins.. In terms of biological role, probable chitinase involved in the degradation of chitin, a component of the cell walls of fungi and exoskeletal elements of some animals (including worms and arthropods). Might be involved in manipulation of host defenses for successful infection. In Penicillium expansum (Blue mold rot fungus), this protein is Probable chitinase LysM18.